The following is a 130-amino-acid chain: Small ribosomal subunit protein uS9 (130 aa).

This sequence belongs to the universal ribosomal protein uS9 family. As to quaternary structure, part of the 30S ribosomal subunit.

This Bacillus subtilis (strain 168) protein is Small ribosomal subunit protein uS9 (rpsI).